The sequence spans 397 residues: S-adenosylmethionine synthase (397 aa).

His16 contacts ATP. Residue Asp18 coordinates Mg(2+). Glu44 contacts K(+). Positions 57 and 100 each coordinate L-methionine. The segment at 100-110 (QSPDIAQGVNE) is flexible loop. Residues 175–177 (DAK), 242–243 (RF), Asp251, 257–258 (RK), Ala274, and Lys278 contribute to the ATP site. An L-methionine-binding site is contributed by Asp251. Position 282 (Lys282) interacts with L-methionine.

The protein belongs to the AdoMet synthase family. As to quaternary structure, homotetramer; dimer of dimers. Mg(2+) is required as a cofactor. The cofactor is K(+).

The protein resides in the cytoplasm. It carries out the reaction L-methionine + ATP + H2O = S-adenosyl-L-methionine + phosphate + diphosphate. It functions in the pathway amino-acid biosynthesis; S-adenosyl-L-methionine biosynthesis; S-adenosyl-L-methionine from L-methionine: step 1/1. Catalyzes the formation of S-adenosylmethionine (AdoMet) from methionine and ATP. The overall synthetic reaction is composed of two sequential steps, AdoMet formation and the subsequent tripolyphosphate hydrolysis which occurs prior to release of AdoMet from the enzyme. The polypeptide is S-adenosylmethionine synthase (Streptococcus thermophilus (strain CNRZ 1066)).